The primary structure comprises 175 residues: Transcription factor E (175 aa).

The 86-residue stretch at 3–88 (DNPLIQQVLF…TWKPSLEKLP (86 aa)) folds into the HTH TFE/IIEalpha-type domain.

The protein belongs to the TFE family. As to quaternary structure, monomer. Interaction with RNA polymerase subunits RpoF and RpoE is necessary for Tfe stimulatory transcription activity. Able to interact with Tbp and RNA polymerase in the absence of DNA promoter. Interacts both with the preinitiation and elongation complexes.

Transcription factor that plays a role in the activation of archaeal genes transcribed by RNA polymerase. Facilitates transcription initiation by enhancing TATA-box recognition by TATA-box-binding protein (Tbp), and transcription factor B (Tfb) and RNA polymerase recruitment. Not absolutely required for transcription in vitro, but particularly important in cases where Tbp or Tfb function is not optimal. It dynamically alters the nucleic acid-binding properties of RNA polymerases by stabilizing the initiation complex and destabilizing elongation complexes. Seems to translocate with the RNA polymerase following initiation and acts by binding to the non template strand of the transcription bubble in elongation complexes. The polypeptide is Transcription factor E (Methanococcus vannielii (strain ATCC 35089 / DSM 1224 / JCM 13029 / OCM 148 / SB)).